The sequence spans 367 residues: UDP-N-acetylglucosamine--N-acetylmuramyl-(pentapeptide) pyrophosphoryl-undecaprenol N-acetylglucosamine transferase (367 aa).

Residues 11 to 13 (TAG), asparagine 125, arginine 163, serine 197, and glutamine 289 contribute to the UDP-N-acetyl-alpha-D-glucosamine site.

This sequence belongs to the glycosyltransferase 28 family. MurG subfamily.

It is found in the cell membrane. The catalysed reaction is di-trans,octa-cis-undecaprenyl diphospho-N-acetyl-alpha-D-muramoyl-L-alanyl-D-glutamyl-meso-2,6-diaminopimeloyl-D-alanyl-D-alanine + UDP-N-acetyl-alpha-D-glucosamine = di-trans,octa-cis-undecaprenyl diphospho-[N-acetyl-alpha-D-glucosaminyl-(1-&gt;4)]-N-acetyl-alpha-D-muramoyl-L-alanyl-D-glutamyl-meso-2,6-diaminopimeloyl-D-alanyl-D-alanine + UDP + H(+). The protein operates within cell wall biogenesis; peptidoglycan biosynthesis. Functionally, cell wall formation. Catalyzes the transfer of a GlcNAc subunit on undecaprenyl-pyrophosphoryl-MurNAc-pentapeptide (lipid intermediate I) to form undecaprenyl-pyrophosphoryl-MurNAc-(pentapeptide)GlcNAc (lipid intermediate II). This Clavibacter michiganensis subsp. michiganensis (strain NCPPB 382) protein is UDP-N-acetylglucosamine--N-acetylmuramyl-(pentapeptide) pyrophosphoryl-undecaprenol N-acetylglucosamine transferase.